Consider the following 608-residue polypeptide: Dolichyl-diphosphooligosaccharide--protein glycosyltransferase subunit 1 (608 aa).

An N-terminal signal peptide occupies residues 1–24 (MEAPAVCLLPLLLLLWAWAPAPGR). Topologically, residues 25–435 (ASPEALPLVN…VVHYTFNKVL (411 aa)) are lumenal. N6-acetyllysine is present on Lys-188. Asn-300 carries an N-linked (GlcNAc...) asparagine glycan. The helical transmembrane segment at 436 to 456 (MLQEPLLVVAAFYILFFTVIV) threads the bilayer. Residues 457–607 (YVRLDFSITK…VTKIDHILDA (151 aa)) are Cytoplasmic-facing. At Lys-539 the chain carries N6-acetyllysine; alternate. Lys-539 participates in a covalent cross-link: Glycyl lysine isopeptide (Lys-Gly) (interchain with G-Cter in SUMO2); alternate.

The protein belongs to the OST1 family. In terms of assembly, component of the oligosaccharyltransferase (OST) complex. OST exists in two different complex forms which contain common core subunits RPN1, RPN2, OST48, OST4, DAD1 and TMEM258, either STT3A or STT3B as catalytic subunits, and form-specific accessory subunits. STT3A complex assembly occurs through the formation of 3 subcomplexes. Subcomplex 1 contains RPN1 and TMEM258, subcomplex 2 contains the STT3A-specific subunits STT3A, DC2/OSTC, and KCP2 as well as the core subunit OST4, and subcomplex 3 contains RPN2, DAD1, and OST48. The STT3A complex can form stable complexes with the Sec61 complex or with both the Sec61 and TRAP complexes. Interacts with TMEM35A/NACHO. Ubiquitinated by the ECS(ASB11) complex. Post-translationally, ufmylated by UFL1 in response to endoplasmic reticulum stress, promoting reticulophagy of endoplasmic reticulum sheets. Detected in liver (at protein level).

Its subcellular location is the endoplasmic reticulum membrane. The protein operates within protein modification; protein glycosylation. Functionally, subunit of the oligosaccharyl transferase (OST) complex that catalyzes the initial transfer of a defined glycan (Glc(3)Man(9)GlcNAc(2) in eukaryotes) from the lipid carrier dolichol-pyrophosphate to an asparagine residue within an Asn-X-Ser/Thr consensus motif in nascent polypeptide chains, the first step in protein N-glycosylation. N-glycosylation occurs cotranslationally and the complex associates with the Sec61 complex at the channel-forming translocon complex that mediates protein translocation across the endoplasmic reticulum (ER). All subunits are required for a maximal enzyme activity. The polypeptide is Dolichyl-diphosphooligosaccharide--protein glycosyltransferase subunit 1 (Sus scrofa (Pig)).